The primary structure comprises 984 residues: Mast/stem cell growth factor receptor Kit (984 aa).

The N-terminal stretch at 1–21 is a signal peptide; sequence MEYHWILLCVSLCFTFHPGDT. Topologically, residues 22–514 are extracellular; sequence KPTITPAGTY…RTISHDLFSP (493 aa). 5 consecutive Ig-like C2-type domains span residues 23–97, 98–197, 203–300, 311–395, and 398–498; these read PTIT…ERAS, IYIY…LTVR, PPVI…VWLD, PVNN…ASVN, and FTIF…QAFT. 4 disulfides stabilise this stretch: Cys44-Cys87, Cys129-Cys178, Cys144-Cys175, and Cys226-Cys284. Asn227, Asn260, Asn314, Asn351, Asn395, Asn448, and Asn476 each carry an N-linked (GlcNAc...) asparagine glycan. An intrachain disulfide couples Cys421 to Cys487. Residues 515-535 traverse the membrane as a helical segment; the sequence is LLIGSVSAACILCLILIVLFY. The Cytoplasmic segment spans residues 536–984; sequence KYMQKPKYQI…GTEPFRVQRV (449 aa). Tyr558 contributes to the Mg(2+) binding site. Phosphotyrosine; by autocatalysis is present on residues Tyr558 and Tyr560. One can recognise a Protein kinase domain in the interval 579 to 926; it reads LRFGKTLGSG…LSDTTKHIYL (348 aa). ATP contacts are provided by residues 586-593, Lys613, and 661-667; these read GSGAFGKV and EYCCFGD. Phosphotyrosine; by autocatalysis is present on residues Tyr690 and Tyr707. Residues 711–723 are compositionally biased toward low complexity; it reads RPSAAGKPSSSSS. Residues 711–749 form a disordered region; it reads RPSAAGKPSSSSSSEKRRSLREGSPYVEEDSESEMFDED. Acidic residues predominate over residues 737–749; that stretch reads VEEDSESEMFDED. The active-site Proton acceptor is the Asp781. Residue Arg785 coordinates ATP. The Mg(2+) site is built by Asn786 and Asp799. Phosphotyrosine; by autocatalysis is present on residues Tyr812 and Tyr925. Residues 936-963 form a disordered region; sequence PRGREESSTHSMASQPFNSAGNNSPPSR. Polar residues predominate over residues 944-960; sequence THSMASQPFNSAGNNSP.

The protein belongs to the protein kinase superfamily. Tyr protein kinase family. CSF-1/PDGF receptor subfamily. In terms of processing, ubiquitinated. Rapidly ubiquitinated after autophosphorylation induced by kitlg/scf binding, leading to internalization and degradation. Post-translationally, autophosphorylated on tyrosine residues. Phosphorylated tyrosine residues are important for interaction with specific binding partners.

The protein localises to the cell membrane. It carries out the reaction L-tyrosyl-[protein] + ATP = O-phospho-L-tyrosyl-[protein] + ADP + H(+). Its function is as follows. Tyrosine-protein kinase that acts as a cell-surface receptor for the cytokine kitlg/scf and plays an essential role in the regulation of cell survival and proliferation, hematopoiesis, stem cell maintenance, gametogenesis, mast cell development, migration and function, and in melanogenesis. This chain is Mast/stem cell growth factor receptor Kit (kit), found in Takifugu rubripes (Japanese pufferfish).